The primary structure comprises 849 residues: Glycogen phosphorylase (849 aa).

Lys-679 bears the N6-(pyridoxal phosphate)lysine mark.

Belongs to the glycogen phosphorylase family. Pyridoxal 5'-phosphate is required as a cofactor.

It carries out the reaction [(1-&gt;4)-alpha-D-glucosyl](n) + phosphate = [(1-&gt;4)-alpha-D-glucosyl](n-1) + alpha-D-glucose 1-phosphate. Its function is as follows. Phosphorylase is an important allosteric enzyme in carbohydrate metabolism. Enzymes from different sources differ in their regulatory mechanisms and in their natural substrates. However, all known phosphorylases share catalytic and structural properties. The protein is Glycogen phosphorylase (glgP) of Synechocystis sp. (strain ATCC 27184 / PCC 6803 / Kazusa).